Here is a 280-residue protein sequence, read N- to C-terminus: Large ribosomal subunit protein uL2 (280 aa).

Disordered stretches follow at residues 27–58 (STPE…GGGH) and 226–280 (MNPV…KHGR). Composition is skewed to basic residues over residues 37–58 (LHGH…GGGH) and 268–280 (IVRR…KHGR).

It belongs to the universal ribosomal protein uL2 family. Part of the 50S ribosomal subunit. Forms a bridge to the 30S subunit in the 70S ribosome.

In terms of biological role, one of the primary rRNA binding proteins. Required for association of the 30S and 50S subunits to form the 70S ribosome, for tRNA binding and peptide bond formation. It has been suggested to have peptidyltransferase activity; this is somewhat controversial. Makes several contacts with the 16S rRNA in the 70S ribosome. The polypeptide is Large ribosomal subunit protein uL2 (Mycobacterium ulcerans (strain Agy99)).